Here is a 130-residue protein sequence, read N- to C-terminus: Small ribosomal subunit protein uS8 (130 aa).

This sequence belongs to the universal ribosomal protein uS8 family. Part of the 30S ribosomal subunit.

In terms of biological role, one of the primary rRNA binding proteins, it binds directly to 16S rRNA central domain where it helps coordinate assembly of the platform of the 30S subunit. In Methanobrevibacter smithii (strain ATCC 35061 / DSM 861 / OCM 144 / PS), this protein is Small ribosomal subunit protein uS8.